Consider the following 109-residue polypeptide: Period circadian protein (109 aa).

Composition is skewed to polar residues over residues 42 to 56 (QSYS…NLSP) and 68 to 80 (SSRN…NLNM). The segment at 42-109 (QSYSTPANTG…LVTLTESLLK (68 aa)) is disordered. Positions 81–97 (GSVTNTSNTGTGTSSGS) are enriched in low complexity.

Forms a heterodimer with timeless (TIM); the complex then translocates into the nucleus. Phosphorylated with a circadian rhythmicity, probably by the double-time protein (dbt). Phosphorylation could be implicated in the stability of per monomer and in the formation of heterodimer per-tim.

The protein localises to the nucleus. The protein resides in the cytoplasm. It localises to the perinuclear region. Its function is as follows. Essential for biological clock functions. Determines the period length of circadian and ultradian rhythms; an increase in PER dosage leads to shortened circadian rhythms and a decrease leads to lengthened circadian rhythms. Essential for the circadian rhythmicity of locomotor activity, eclosion behavior, and for the rhythmic component of the male courtship song that originates in the thoracic nervous system. The biological cycle depends on the rhythmic formation and nuclear localization of the TIM-PER complex. Light induces the degradation of TIM, which promotes elimination of PER. Nuclear activity of the heterodimer coordinatively regulates PER and TIM transcription through a negative feedback loop. Behaves as a negative element in circadian transcriptional loop. Does not appear to bind DNA, suggesting indirect transcriptional inhibition. The chain is Period circadian protein (per) from Musca domestica (House fly).